The chain runs to 393 residues: Probable acetyl-CoA acyltransferase (393 aa).

Residue C88 is the Acyl-thioester intermediate of the active site. Residues H349 and C378 each act as proton acceptor in the active site.

This sequence belongs to the thiolase-like superfamily. Thiolase family.

It is found in the cytoplasm. The catalysed reaction is 2 acetyl-CoA = acetoacetyl-CoA + CoA. The polypeptide is Probable acetyl-CoA acyltransferase (Staphylococcus aureus (strain bovine RF122 / ET3-1)).